We begin with the raw amino-acid sequence, 160 residues long: uncharacterized protein (160 aa).

Positions 1-29 (MTGKTHIMGGIASCTAAAYYYGFDPVLMA) are cleaved as a signal peptide. The next 2 membrane-spanning stretches (helical) occupy residues 67–87 (TFTH…TYIP) and 137–157 (QLVL…LFHG).

This sequence to E.coli YdjM.

It is found in the cell membrane. This is an uncharacterized protein from Bacillus subtilis (strain 168).